A 266-amino-acid chain; its full sequence is ATP synthase subunit a (266 aa).

5 consecutive transmembrane segments (helical) span residues 28 to 48, 88 to 108, 141 to 161, 206 to 226, and 237 to 257; these read SINV…LVIF, LIAP…LMDL, DVNI…FYSI, LFGN…LLPW, and AIFH…LTVV.

This sequence belongs to the ATPase A chain family. In terms of assembly, F-type ATPases have 2 components, CF(1) - the catalytic core - and CF(0) - the membrane proton channel. CF(1) has five subunits: alpha(3), beta(3), gamma(1), delta(1), epsilon(1). CF(0) has three main subunits: a(1), b(2) and c(9-12). The alpha and beta chains form an alternating ring which encloses part of the gamma chain. CF(1) is attached to CF(0) by a central stalk formed by the gamma and epsilon chains, while a peripheral stalk is formed by the delta and b chains.

The protein resides in the cell inner membrane. Its function is as follows. Key component of the proton channel; it plays a direct role in the translocation of protons across the membrane. This is ATP synthase subunit a from Pectobacterium carotovorum subsp. carotovorum (strain PC1).